The following is a 338-amino-acid chain: 4-hydroxythreonine-4-phosphate dehydrogenase (338 aa).

The substrate site is built by histidine 136 and threonine 137. The a divalent metal cation site is built by histidine 173, histidine 218, and histidine 273. Residues lysine 281, asparagine 290, and arginine 299 each contribute to the substrate site.

The protein belongs to the PdxA family. Homodimer. Requires Zn(2+) as cofactor. Mg(2+) serves as cofactor. Co(2+) is required as a cofactor.

Its subcellular location is the cytoplasm. It carries out the reaction 4-(phosphooxy)-L-threonine + NAD(+) = 3-amino-2-oxopropyl phosphate + CO2 + NADH. It participates in cofactor biosynthesis; pyridoxine 5'-phosphate biosynthesis; pyridoxine 5'-phosphate from D-erythrose 4-phosphate: step 4/5. In terms of biological role, catalyzes the NAD(P)-dependent oxidation of 4-(phosphooxy)-L-threonine (HTP) into 2-amino-3-oxo-4-(phosphooxy)butyric acid which spontaneously decarboxylates to form 3-amino-2-oxopropyl phosphate (AHAP). In Ralstonia nicotianae (strain ATCC BAA-1114 / GMI1000) (Ralstonia solanacearum), this protein is 4-hydroxythreonine-4-phosphate dehydrogenase.